The sequence spans 481 residues: Bestrophin homolog 17 (481 aa).

Topologically, residues 1–27 (MTVSYQLDVSSGNPLLFLRLLGRWRGS) are cytoplasmic. The chain crosses the membrane as a helical span at residues 28 to 48 (IWKSVVGDLFVWLLFYYAIYF). The Extracellular portion of the chain corresponds to 49-95 (AYRYAFSKQLQTVFEEISIHTDDRMKYLPLTFMLGFFVTTVFERWRS). A helical transmembrane segment spans residues 96–116 (ALNVMPFIESVALSVAVLLPG). Residues 117–230 (KGREDRLTRR…AMETLIKFDA (114 aa)) are Cytoplasmic-facing. A helical transmembrane segment spans residues 231–251 (IPIPIAYPQVVFLAVRVYFAI). Over 252–274 (CLVSRQFLISDMKSKTQMDWPVP) the chain is Extracellular. The helical transmembrane segment at 275-295 (IMTVLEFIFVIGWMKVAEVLL) threads the bilayer. The Cytoplasmic segment spans residues 296–481 (NPLGEDDDDF…SSEESVDKKG (186 aa)). The interval 427-481 (AGMLNKSTQPDRPTMETVSEEHEPSHFYRGDRVHSSDSGLSKTQQSSEESVDKKG) is disordered. Basic and acidic residues predominate over residues 445-461 (SEEHEPSHFYRGDRVHS). The span at 462–474 (SDSGLSKTQQSSE) shows a compositional bias: polar residues.

The protein belongs to the anion channel-forming bestrophin (TC 1.A.46) family. Calcium-sensitive chloride channel subfamily. As to quaternary structure, forms oligomers.

It localises to the cell membrane. Its function is as follows. Forms chloride channels. In Caenorhabditis elegans, this protein is Bestrophin homolog 17.